Consider the following 633-residue polypeptide: MTTSLGTHYTWLLVALPLAGAAILLFGGRRTDAWGHLLGCAAALAAFGVGAMLLADMLGRDGLERAIHQQVFTWIPAGGLQVDFGLQIDQLSMCFVLLISGVGSLIHIYSVGYMAEDPDRRRFFGYLNLFLASMLLLVVADNYVLLYVGWEGVGLASYLLIGFWYHKPSAATAAKKAFVMNRVGDAGLAVGMFLTFSTFGTLSYAGVFAGVPAASRAVLTAIGLLMLLGACAKSAQVPLQAWLGDAMEGPTPVSALIHAATMVTAGVYLIVRSGPLYNLAPTAQLAVVIVGAVTLLFGAIIGCAKDDIKRALAASTISQIGYMVLAAGLGPAGYAFAIMHLLTHGFFKAGLFLGSGAVIHAMHEEQDMRRYGGLRAALPVTFATFGLAYLAIIGVPPFAGFFSKDAIIEAALGAGGIRGSLLGGAALLGAGVTAFYMTRVMLMTFFGEKRWTPGAHPHEAPAVMTWPMILLAVGSVFSGGLLAVGGTLRHWLQPVVGSHEEATHALPTWVATTLALGVVAVGIAVAYRMYGTAPIPRVAPVRVSALTAAARADLYGDAFNEEVFMRPGAQLTNAVVAVDDAGVDGSVNALATLVSQTSNRLRQMQTGFARNYALSMLVGAVLVAAALLVVQLW.

Transmembrane regions (helical) follow at residues 8–28, 34–54, 95–115, 123–143, 188–208, 209–229, 251–271, 284–304, 322–342, 382–402, 412–432, 468–488, 505–525, and 613–633; these read HYTWLLVALPLAGAAILLFGG, WGHLLGCAAALAAFGVGAMLL, FVLLISGVGSLIHIYSVGYMA, FFGYLNLFLASMLLLVVADNY, LAVGMFLTFSTFGTLSYAGVF, AGVPAASRAVLTAIGLLMLLG, TPVSALIHAATMVTAGVYLIV, QLAVVIVGAVTLLFGAIIGCA, YMVLAAGLGPAGYAFAIMHLL, FATFGLAYLAIIGVPPFAGFF, LGAGGIRGSLLGGAALLGAGV, MILLAVGSVFSGGLLAVGGTL, ALPTWVATTLALGVVAVGIAV, and ALSMLVGAVLVAAALLVVQLW.

Belongs to the complex I subunit 5 family.

Its subcellular location is the cell membrane. The enzyme catalyses a quinone + NADH + 5 H(+)(in) = a quinol + NAD(+) + 4 H(+)(out). In terms of biological role, NDH-1 shuttles electrons from NADH, via FMN and iron-sulfur (Fe-S) centers, to quinones in the respiratory chain. The immediate electron acceptor for the enzyme in this species is believed to be menaquinone. Couples the redox reaction to proton translocation (for every two electrons transferred, four hydrogen ions are translocated across the cytoplasmic membrane), and thus conserves the redox energy in a proton gradient. This chain is NADH-quinone oxidoreductase subunit L (nuoL), found in Mycobacterium tuberculosis (strain CDC 1551 / Oshkosh).